The chain runs to 585 residues: Protein NRT1/ PTR FAMILY 8.3 (585 aa).

Glycine 2 carries the N-acetylglycine modification. The helical transmembrane segment at 91-111 (WQGTCYLTPLIGAVLADAYWG) threads the bilayer. Residue threonine 115 is modified to Phosphothreonine. 10 helical membrane-spanning segments follow: residues 116–136 (IACF…SASV), 154–174 (PAQY…TGGI), 200–220 (FFNW…SLLV), 228–248 (WGLG…SFFF), 351–371 (FPIW…STMF), 387–407 (LPPA…VPLY), 431–451 (MGIG…VEII), 472–492 (VLWQ…YFIG), 511–531 (ALAL…LTLV), and 556–576 (FFWL…FSAA).

This sequence belongs to the major facilitator superfamily. Proton-dependent oligopeptide transporter (POT/PTR) (TC 2.A.17) family. Highly expressed in young leaves, roots and germinating seeds, intermediately in stems, flowers and mature leaves and at low level in siliques.

Its subcellular location is the vacuole membrane. Its activity is regulated as follows. Inhibited by leucyl-ethionine. Its function is as follows. Peptide transporter. Mediates the transport of di- and tripeptides. High affinity, low capacity transporter. Can also transport histidine. The sequence is that of Protein NRT1/ PTR FAMILY 8.3 (NPF8.3) from Arabidopsis thaliana (Mouse-ear cress).